The following is a 324-amino-acid chain: DNA-directed RNA polymerase subunit alpha (324 aa).

Residues 1–230 (MQSSGLLKPR…EQLSVFADLE (230 aa)) form an alpha N-terminal domain (alpha-NTD) region. Positions 244 to 324 (VDPVLLRPVD…NWPPAGLEKA (81 aa)) are alpha C-terminal domain (alpha-CTD).

Belongs to the RNA polymerase alpha chain family. As to quaternary structure, homodimer. The RNAP catalytic core consists of 2 alpha, 1 beta, 1 beta' and 1 omega subunit. When a sigma factor is associated with the core the holoenzyme is formed, which can initiate transcription.

The catalysed reaction is RNA(n) + a ribonucleoside 5'-triphosphate = RNA(n+1) + diphosphate. In terms of biological role, DNA-dependent RNA polymerase catalyzes the transcription of DNA into RNA using the four ribonucleoside triphosphates as substrates. This chain is DNA-directed RNA polymerase subunit alpha, found in Dechloromonas aromatica (strain RCB).